The following is a 104-amino-acid chain: Phosphoribosyl-ATP pyrophosphatase (104 aa).

It belongs to the PRA-PH family.

The protein resides in the cytoplasm. It catalyses the reaction 1-(5-phospho-beta-D-ribosyl)-ATP + H2O = 1-(5-phospho-beta-D-ribosyl)-5'-AMP + diphosphate + H(+). It functions in the pathway amino-acid biosynthesis; L-histidine biosynthesis; L-histidine from 5-phospho-alpha-D-ribose 1-diphosphate: step 2/9. This is Phosphoribosyl-ATP pyrophosphatase from Methanosarcina barkeri (strain Fusaro / DSM 804).